A 347-amino-acid chain; its full sequence is Holliday junction branch migration complex subunit RuvB (347 aa).

Residues 4 to 184 (QDRIVDGHAS…FGIVQRLEFY (181 aa)) are large ATPase domain (RuvB-L). ATP contacts are provided by residues Arg-24, Gly-65, Lys-68, Thr-69, Thr-70, 131-133 (EDF), Arg-174, Tyr-184, and Arg-221. A Mg(2+)-binding site is contributed by Thr-69. Residues 185–255 (SVQDLTHIVK…IADSALNMLN (71 aa)) form a small ATPAse domain (RuvB-S) region. Residues 258 to 347 (HHGFDHMDRR…SQQQDSLPGI (90 aa)) are head domain (RuvB-H). 3 residues coordinate DNA: Arg-294, Arg-313, and Arg-318.

It belongs to the RuvB family. Homohexamer. Forms an RuvA(8)-RuvB(12)-Holliday junction (HJ) complex. HJ DNA is sandwiched between 2 RuvA tetramers; dsDNA enters through RuvA and exits via RuvB. An RuvB hexamer assembles on each DNA strand where it exits the tetramer. Each RuvB hexamer is contacted by two RuvA subunits (via domain III) on 2 adjacent RuvB subunits; this complex drives branch migration. In the full resolvosome a probable DNA-RuvA(4)-RuvB(12)-RuvC(2) complex forms which resolves the HJ.

It is found in the cytoplasm. It catalyses the reaction ATP + H2O = ADP + phosphate + H(+). Functionally, the RuvA-RuvB-RuvC complex processes Holliday junction (HJ) DNA during genetic recombination and DNA repair, while the RuvA-RuvB complex plays an important role in the rescue of blocked DNA replication forks via replication fork reversal (RFR). RuvA specifically binds to HJ cruciform DNA, conferring on it an open structure. The RuvB hexamer acts as an ATP-dependent pump, pulling dsDNA into and through the RuvAB complex. RuvB forms 2 homohexamers on either side of HJ DNA bound by 1 or 2 RuvA tetramers; 4 subunits per hexamer contact DNA at a time. Coordinated motions by a converter formed by DNA-disengaged RuvB subunits stimulates ATP hydrolysis and nucleotide exchange. Immobilization of the converter enables RuvB to convert the ATP-contained energy into a lever motion, pulling 2 nucleotides of DNA out of the RuvA tetramer per ATP hydrolyzed, thus driving DNA branch migration. The RuvB motors rotate together with the DNA substrate, which together with the progressing nucleotide cycle form the mechanistic basis for DNA recombination by continuous HJ branch migration. Branch migration allows RuvC to scan DNA until it finds its consensus sequence, where it cleaves and resolves cruciform DNA. The sequence is that of Holliday junction branch migration complex subunit RuvB from Teredinibacter turnerae (strain ATCC 39867 / T7901).